A 309-amino-acid chain; its full sequence is Glutaminase (309 aa).

Ser65, Asn117, Glu162, Asn169, Tyr193, Tyr245, and Val263 together coordinate substrate.

This sequence belongs to the glutaminase family. Homotetramer.

It carries out the reaction L-glutamine + H2O = L-glutamate + NH4(+). This is Glutaminase from Bacillus cytotoxicus (strain DSM 22905 / CIP 110041 / 391-98 / NVH 391-98).